Here is a 544-residue protein sequence, read N- to C-terminus: Chaperonin GroEL (544 aa).

ATP is bound by residues 30-33, Lys-51, 87-91, Gly-415, 478-480, and Asp-494; these read TLGP, DGTTT, and DVA. The tract at residues 524–544 is disordered; the sequence is PEKEKKPATPAGAGGMGDMEY. The segment covering 535-544 has biased composition (gly residues); it reads GAGGMGDMEY.

It belongs to the chaperonin (HSP60) family. As to quaternary structure, forms a cylinder of 14 subunits composed of two heptameric rings stacked back-to-back. Interacts with the co-chaperonin GroES.

Its subcellular location is the cytoplasm. It catalyses the reaction ATP + H2O + a folded polypeptide = ADP + phosphate + an unfolded polypeptide.. In terms of biological role, together with its co-chaperonin GroES, plays an essential role in assisting protein folding. The GroEL-GroES system forms a nano-cage that allows encapsulation of the non-native substrate proteins and provides a physical environment optimized to promote and accelerate protein folding. This is Chaperonin GroEL from Methylacidiphilum infernorum (isolate V4) (Methylokorus infernorum (strain V4)).